A 124-amino-acid polypeptide reads, in one-letter code: Small ribosomal subunit protein bS16 (124 aa).

Residues leucine 81 to proline 90 are compositionally biased toward basic residues. The tract at residues leucine 81 to glutamate 124 is disordered. Over residues histidine 91 to glutamate 101 the composition is skewed to basic and acidic residues. The span at arginine 102–glutamate 124 shows a compositional bias: low complexity.

The protein belongs to the bacterial ribosomal protein bS16 family.

This chain is Small ribosomal subunit protein bS16, found in Bartonella tribocorum (strain CIP 105476 / IBS 506).